The following is a 220-amino-acid chain: Peptide methionine sulfoxide reductase MsrA (220 aa).

Cys-52 is an active-site residue.

The protein belongs to the MsrA Met sulfoxide reductase family.

The catalysed reaction is L-methionyl-[protein] + [thioredoxin]-disulfide + H2O = L-methionyl-(S)-S-oxide-[protein] + [thioredoxin]-dithiol. It carries out the reaction [thioredoxin]-disulfide + L-methionine + H2O = L-methionine (S)-S-oxide + [thioredoxin]-dithiol. Its function is as follows. Has an important function as a repair enzyme for proteins that have been inactivated by oxidation. Catalyzes the reversible oxidation-reduction of methionine sulfoxide in proteins to methionine. In Corynebacterium diphtheriae (strain ATCC 700971 / NCTC 13129 / Biotype gravis), this protein is Peptide methionine sulfoxide reductase MsrA.